A 455-amino-acid polypeptide reads, in one-letter code: EP1-like glycoprotein 2 (455 aa).

Positions 1–22 (MSRFAILVTLALAIATVSVVIA) are cleaved as a signal peptide. The region spanning 44–163 (EYDASYRFIE…NGKFVWQSFD (120 aa)) is the Bulb-type lectin domain. 6 N-linked (GlcNAc...) asparagine glycosylation sites follow: asparagine 56, asparagine 106, asparagine 191, asparagine 211, asparagine 241, and asparagine 289. The residue at position 374 (cysteine 374) is an S-nitrosocysteine. In terms of domain architecture, PAN spans 374–455 (CSGVKGKTVN…NTSSVAYIKY (82 aa)). 2 disulfide bridges follow: cysteine 410-cysteine 432 and cysteine 414-cysteine 420. Residue asparagine 446 is glycosylated (N-linked (GlcNAc...) asparagine).

It localises to the secreted. It is found in the cell wall. The chain is EP1-like glycoprotein 2 from Arabidopsis thaliana (Mouse-ear cress).